We begin with the raw amino-acid sequence, 204 residues long: Small ribosomal subunit protein uS4 (204 aa).

The tract at residues 1 to 49 is disordered; it reads MSKRKSAKYKLDRRMGENIWGRPNSPVNKRSYGPGQHGQRRKGKTSDFG. Residues 94 to 154 form the S4 RNA-binding domain; the sequence is QRLDMVVYRA…NKAKEMALVI (61 aa).

The protein belongs to the universal ribosomal protein uS4 family. As to quaternary structure, part of the 30S ribosomal subunit. Contacts protein S5. The interaction surface between S4 and S5 is involved in control of translational fidelity.

Its function is as follows. One of the primary rRNA binding proteins, it binds directly to 16S rRNA where it nucleates assembly of the body of the 30S subunit. In terms of biological role, with S5 and S12 plays an important role in translational accuracy. The sequence is that of Small ribosomal subunit protein uS4 from Erythrobacter litoralis (strain HTCC2594).